A 251-amino-acid polypeptide reads, in one-letter code: MTTRLPQLLLALLASAVSLAASADEVQVAVAANFTAPIQAIAKEFEKDTGHRLVAAYGATGQFYTQIKNGAPFQVFLSADDSTPAKLEQEGEVVPGSRFTYAIGTLALWSPKAGYVDAEGEVLKSGSFRHLSIANPKTAPYGLAATQAMDKLGLAATLGPKLVEGQNISQAYQFVSSGNAELGFVALSQIYKDGKVATGSAWIVPTELHDPIRQDAVILNKGKDNAAAKALVDYLKGAKAAALIKSYGYEL.

The N-terminal stretch at 1 to 23 (MTTRLPQLLLALLASAVSLAASA) is a signal peptide. Residues Thr60 and Ile168 each coordinate molybdate.

Belongs to the bacterial solute-binding protein ModA family. In terms of assembly, the complex is composed of two ATP-binding proteins (ModC), two transmembrane proteins (ModB) and a solute-binding protein (ModA).

The protein resides in the periplasm. Part of the ABC transporter complex ModABC involved in the transport of molybdenum into the cell. Binds tungstate and molybdate. Can also bind chromate, with lower affinity. Plays an essential role in recruitment of molybdate for nitrate reduction. The chain is Tungstate/molybdate/chromate-binding protein ModA from Pseudomonas aeruginosa (strain ATCC 15692 / DSM 22644 / CIP 104116 / JCM 14847 / LMG 12228 / 1C / PRS 101 / PAO1).